A 969-amino-acid chain; its full sequence is RNA polymerase-associated protein RapA (969 aa).

In terms of domain architecture, Helicase ATP-binding spans glutamate 164 to aspartate 334. Aspartate 177–threonine 184 is a binding site for ATP. The short motif at aspartate 280–histidine 283 is the DEAH box element. The Helicase C-terminal domain maps to arginine 492 to lysine 679.

It belongs to the SNF2/RAD54 helicase family. RapA subfamily. As to quaternary structure, interacts with the RNAP. Has a higher affinity for the core RNAP than for the holoenzyme. Its ATPase activity is stimulated by binding to RNAP.

Its function is as follows. Transcription regulator that activates transcription by stimulating RNA polymerase (RNAP) recycling in case of stress conditions such as supercoiled DNA or high salt concentrations. Probably acts by releasing the RNAP, when it is trapped or immobilized on tightly supercoiled DNA. Does not activate transcription on linear DNA. Probably not involved in DNA repair. This chain is RNA polymerase-associated protein RapA, found in Vibrio atlanticus (strain LGP32) (Vibrio splendidus (strain Mel32)).